Here is a 473-residue protein sequence, read N- to C-terminus: Photosystem II CP43 reaction center protein (473 aa).

A propeptide spanning residues 1–14 (MKILYSLRRFYHVE) is cleaved from the precursor. Threonine 15 is modified (N-acetylthreonine). Position 15 is a phosphothreonine (threonine 15). Transmembrane regions (helical) follow at residues 69–93 (LFEV…PHLA), 134–155 (LLGP…KDRN), 178–200 (KALY…RKIT), 255–275 (KPFA…LSYS), and 291–312 (WFNN…ASQA). Glutamate 367 is a [CaMn4O5] cluster binding site. The helical transmembrane segment at 447 to 471 (RARAAAAGFEKGIDRDLEPVLFMTP) threads the bilayer.

It belongs to the PsbB/PsbC family. PsbC subfamily. As to quaternary structure, PSII is composed of 1 copy each of membrane proteins PsbA, PsbB, PsbC, PsbD, PsbE, PsbF, PsbH, PsbI, PsbJ, PsbK, PsbL, PsbM, PsbT, PsbX, PsbY, PsbZ, Psb30/Ycf12, at least 3 peripheral proteins of the oxygen-evolving complex and a large number of cofactors. It forms dimeric complexes. The cofactor is Binds multiple chlorophylls and provides some of the ligands for the Ca-4Mn-5O cluster of the oxygen-evolving complex. It may also provide a ligand for a Cl- that is required for oxygen evolution. PSII binds additional chlorophylls, carotenoids and specific lipids..

Its subcellular location is the plastid. The protein resides in the chloroplast thylakoid membrane. Its function is as follows. One of the components of the core complex of photosystem II (PSII). It binds chlorophyll and helps catalyze the primary light-induced photochemical processes of PSII. PSII is a light-driven water:plastoquinone oxidoreductase, using light energy to abstract electrons from H(2)O, generating O(2) and a proton gradient subsequently used for ATP formation. This is Photosystem II CP43 reaction center protein from Lemna minor (Common duckweed).